Here is a 229-residue protein sequence, read N- to C-terminus: 5'-methylthioadenosine/S-adenosylhomocysteine nucleosidase (229 aa).

The active-site Proton acceptor is the Glu-12. Residues Gly-78, Ile-152, and 173–174 (ME) each bind substrate. Asp-197 functions as the Proton donor in the catalytic mechanism.

This sequence belongs to the PNP/UDP phosphorylase family. MtnN subfamily.

It carries out the reaction S-adenosyl-L-homocysteine + H2O = S-(5-deoxy-D-ribos-5-yl)-L-homocysteine + adenine. The enzyme catalyses S-methyl-5'-thioadenosine + H2O = 5-(methylsulfanyl)-D-ribose + adenine. The catalysed reaction is 5'-deoxyadenosine + H2O = 5-deoxy-D-ribose + adenine. Its pathway is amino-acid biosynthesis; L-methionine biosynthesis via salvage pathway; S-methyl-5-thio-alpha-D-ribose 1-phosphate from S-methyl-5'-thioadenosine (hydrolase route): step 1/2. In terms of biological role, catalyzes the irreversible cleavage of the glycosidic bond in both 5'-methylthioadenosine (MTA) and S-adenosylhomocysteine (SAH/AdoHcy) to adenine and the corresponding thioribose, 5'-methylthioribose and S-ribosylhomocysteine, respectively. Also cleaves 5'-deoxyadenosine, a toxic by-product of radical S-adenosylmethionine (SAM) enzymes, into 5-deoxyribose and adenine. This Histophilus somni (strain 129Pt) (Haemophilus somnus) protein is 5'-methylthioadenosine/S-adenosylhomocysteine nucleosidase.